The following is a 1005-amino-acid chain: PDZ domain-containing protein 7 (1005 aa).

2 PDZ domains span residues 86–168 (SVRV…RMGR) and 210–293 (IVHL…ETGR). Disordered stretches follow at residues 353–378 (PEEPGSRGPGWGRADTAMQTEPDAGG), 700–859 (VSPS…KTPS), and 949–1005 (VRVP…ARLL). Basic residues predominate over residues 770–786 (AQSRSRSRSRSRSRSRS). A compositionally biased stretch (low complexity) spans 787 to 799 (SRGQGKSPGRRSP). Positions 989–998 (PEPPTNPQTP) are enriched in pro residues.

In terms of assembly, homodimerizes (via PDZ2 domain). Component of USH2 complex, composed of ADGRV1, PDZD7, USH2A and WHRN. Interacts (via PDZ domains) with WHRN; the interaction is direct. Interacts with USH1G. Interacts with ADGRV1 (via the cytoplasmic region). Interacts with USH2A (via the cytoplasmic region). Interacts with MYO7A (via MyTH4-FERM domains).

It is found in the cell projection. It localises to the cilium. The protein resides in the nucleus. Its subcellular location is the stereocilium. In terms of biological role, in cochlear developing hair cells, essential in organizing the USH2 complex at stereocilia ankle links. Blocks inhibition of adenylate cyclase activity mediated by ADGRV1. This chain is PDZ domain-containing protein 7 (PDZD7), found in Pongo abelii (Sumatran orangutan).